The sequence spans 377 residues: Anhydro-N-acetylmuramic acid kinase (377 aa).

Gly-14–Asp-21 lines the ATP pocket.

It belongs to the anhydro-N-acetylmuramic acid kinase family.

It carries out the reaction 1,6-anhydro-N-acetyl-beta-muramate + ATP + H2O = N-acetyl-D-muramate 6-phosphate + ADP + H(+). It functions in the pathway amino-sugar metabolism; 1,6-anhydro-N-acetylmuramate degradation. The protein operates within cell wall biogenesis; peptidoglycan recycling. Catalyzes the specific phosphorylation of 1,6-anhydro-N-acetylmuramic acid (anhMurNAc) with the simultaneous cleavage of the 1,6-anhydro ring, generating MurNAc-6-P. Is required for the utilization of anhMurNAc either imported from the medium or derived from its own cell wall murein, and thus plays a role in cell wall recycling. The protein is Anhydro-N-acetylmuramic acid kinase of Pasteurella multocida (strain Pm70).